Consider the following 78-residue polypeptide: Pigment-dispersing hormone peptides (78 aa).

Positions 1–22 (MRSAVIVTMLVVVALAALLTQG) are cleaved as a signal peptide. At Ala75 the chain carries Alanine amide.

It belongs to the arthropod PDH family. As to expression, expressed in eyestalk tissue and cerebral ganglia.

The protein localises to the secreted. Its function is as follows. The pigment-dispersing hormone causes the migration of the distal retinal pigment into the proximal end of the pigment chromatophore cells and thus decreases the amount of light entering the retinulas. May also function as a neurotransmitter and/or neuromodulator. The chain is Pigment-dispersing hormone peptides from Carcinus maenas (Common shore crab).